The chain runs to 239 residues: Geranylgeranylglyceryl phosphate synthase (239 aa).

Mg(2+) is bound by residues Asp-18 and Ser-45. Sn-glycerol 1-phosphate is bound by residues 166–172 (YLEAGSG), 197–198 (GG), and 219–220 (GT).

It belongs to the GGGP/HepGP synthase family. Group II subfamily. The cofactor is Mg(2+).

It is found in the cytoplasm. The catalysed reaction is sn-glycerol 1-phosphate + (2E,6E,10E)-geranylgeranyl diphosphate = sn-3-O-(geranylgeranyl)glycerol 1-phosphate + diphosphate. The protein operates within membrane lipid metabolism; glycerophospholipid metabolism. Functionally, prenyltransferase that catalyzes the transfer of the geranylgeranyl moiety of geranylgeranyl diphosphate (GGPP) to the C3 hydroxyl of sn-glycerol-1-phosphate (G1P). This reaction is the first ether-bond-formation step in the biosynthesis of archaeal membrane lipids. This chain is Geranylgeranylglyceryl phosphate synthase, found in Pyrobaculum arsenaticum (strain DSM 13514 / JCM 11321 / PZ6).